The chain runs to 239 residues: uncharacterized protein (239 aa).

Residues 104–127 (LPATSQSSQPKSTNSSTESSSIGQ) form a disordered region. The span at 107-127 (TSQSSQPKSTNSSTESSSIGQ) shows a compositional bias: low complexity. The stretch at 134–202 (ENEINLNKNK…HFIQNNQESF (69 aa)) forms a coiled coil. Residues 211–231 (VKIGSAFIIYIFYNVLFFIIV) traverse the membrane as a helical segment.

The protein localises to the membrane. This is an uncharacterized protein from Dictyostelium discoideum (Social amoeba).